A 278-amino-acid polypeptide reads, in one-letter code: Large ribosomal subunit protein uL2 (278 aa).

Disordered regions lie at residues 1–58 (MAIR…GGGH) and 225–278 (VMNP…KNKR). Over residues 37–58 (LHGRGGRNAHGRITTRHKGGGH) the composition is skewed to basic residues. Basic and acidic residues predominate over residues 253-267 (PEGRTRKNKASDKMI). The segment covering 268-278 (VRRRRTGKNKR) has biased composition (basic residues).

This sequence belongs to the universal ribosomal protein uL2 family. Part of the 50S ribosomal subunit. Forms a bridge to the 30S subunit in the 70S ribosome.

One of the primary rRNA binding proteins. Required for association of the 30S and 50S subunits to form the 70S ribosome, for tRNA binding and peptide bond formation. It has been suggested to have peptidyltransferase activity; this is somewhat controversial. Makes several contacts with the 16S rRNA in the 70S ribosome. In Rhodococcus erythropolis (strain PR4 / NBRC 100887), this protein is Large ribosomal subunit protein uL2.